The following is a 557-amino-acid chain: Potassium-transporting ATPase potassium-binding subunit (557 aa).

Transmembrane regions (helical) follow at residues 5–25 (GFLL…PLGS), 63–83 (LCAI…MLLG), 132–152 (GLTV…FAFI), 170–190 (LLRI…LFFI), 253–273 (FVQM…FGEV), 283–303 (LLWA…WAEV), 329–349 (VLVS…AVIA), 356–376 (ALGG…FGGV), 379–399 (GLYG…LMIG), 416–436 (LTAL…ALAM), 484–504 (LLAF…MAIA), and 526–546 (LFVG…FIPA).

It belongs to the KdpA family. As to quaternary structure, the system is composed of three essential subunits: KdpA, KdpB and KdpC.

The protein resides in the cell inner membrane. Part of the high-affinity ATP-driven potassium transport (or Kdp) system, which catalyzes the hydrolysis of ATP coupled with the electrogenic transport of potassium into the cytoplasm. This subunit binds the periplasmic potassium ions and delivers the ions to the membrane domain of KdpB through an intramembrane tunnel. The chain is Potassium-transporting ATPase potassium-binding subunit from Shigella flexneri.